Reading from the N-terminus, the 705-residue chain is Dolichyl-diphosphooligosaccharide--protein glycosyltransferase subunit STT3A (705 aa).

Over 1-17 the chain is Cytoplasmic; sequence MTKLGFLRLSYEKQDTL. Residues 18–38 traverse the membrane as a helical segment; that stretch reads LKLLILSMAAVLSFSTRLFAV. Residues 39–119 are Lumenal-facing; the sequence is LRFESVIHEF…IDIRNVCVFL (81 aa). The DXD motif 1 signature appears at 47-49; it reads EFD. Mn(2+) is bound at residue D49. The chain crosses the membrane as a helical span at residues 120-138; the sequence is APLFSSFTTIVTYHLTKEL. Over 139–140 the chain is Cytoplasmic; it reads KD. A helical membrane pass occupies residues 141–158; that stretch reads AGAGLLAAAMIAVVPGYI. Topologically, residues 159 to 169 are lumenal; that stretch reads SRSVAGSYDNE. Mn(2+)-binding residues include D167 and E169. Positions 167-169 match the DXD motif 2 motif; sequence DNE. Residues 170 to 189 traverse the membrane as a helical segment; it reads GIAIFCMLLTYYMWIKAVKT. The Cytoplasmic segment spans residues 190–191; it reads GS. A helical membrane pass occupies residues 192-206; the sequence is IYWAAKCALAYFYMV. Over 207–211 the chain is Lumenal; that stretch reads SSWGG. Residues 212–228 form a helical membrane-spanning segment; sequence YVFLINLIPLHVLVLML. Topologically, residues 229-233 are cytoplasmic; the sequence is TGRFS. The chain crosses the membrane as a helical span at residues 234 to 259; that stretch reads HRIYVAYCTVYCLGTILSMQISFVGF. Residues 260–267 are Lumenal-facing; the sequence is QPVLSSEH. Residues 268–287 form a helical membrane-spanning segment; sequence MAAFGVFGLCQIHAFVDYLR. The Cytoplasmic segment spans residues 288-300; that stretch reads SKLNPQQFEVLFR. Residues 301–321 form a helical membrane-spanning segment; it reads SVISLVGFVLLTVGALLMLTG. The Lumenal portion of the chain corresponds to 322 to 356; sequence KISPWTGRFYSLLDPSYAKNNIPIIASVSEHQPTT. The SVSE motif signature appears at 348 to 351; it reads SVSE. A helical membrane pass occupies residues 357–379; sequence WSSYYFDLQLLVFMFPVGLYYCF. Residues 380–385 are Cytoplasmic-facing; the sequence is SNLSDA. The helical transmembrane segment at 386-402 threads the bilayer; the sequence is RIFIIMYGVTSMYFSAV. The Lumenal portion of the chain corresponds to 403 to 406; the sequence is MVRL. R405 is a dolichyl diphosphooligosaccharide binding site. The helical transmembrane segment at 407-428 threads the bilayer; it reads MLVLAPVMCILSGIGVSQVLST. The Cytoplasmic segment spans residues 429 to 453; that stretch reads YMKNLDISRPDKKSKKQQDSTYPIK. Residues 454–473 traverse the membrane as a helical segment; sequence NEVASGMILVMAFFLITYTF. Residues 474–705 are Lumenal-facing; that stretch reads HSTWVTSEAY…DLDNRGLSRT (232 aa). The interacts with target acceptor peptide in protein substrate stretch occupies residues 525 to 527; sequence WWD. The short motif at 525–529 is the WWDYG motif element; the sequence is WWDYG. Y530 contributes to the dolichyl diphosphooligosaccharide binding site. N-linked (GlcNAc...) asparagine glycosylation is found at N537 and N544. N548 is a glycosylation site (N-linked (GlcNAc...) (high mannose) asparagine). The DK motif signature appears at 592 to 599; it reads DINKFLWM.

Belongs to the STT3 family. As to quaternary structure, component of the oligosaccharyltransferase (OST) complex. There are 2 OST complexes, OST-A and OST-B, which contain STT3A or STT3B as catalytic subunit, respectively. OST-A and OST-B contain common core subunits RPN1, RPN2, OST48, OST4, DAD1 and TMEM258, and OST-A contains DC2/OSTC and KRTCAP2/KCP2 specific accessory subunits. OST-A complex assembly occurs through the formation of 3 subcomplexes. Subcomplex 1 contains RPN1 and TMEM258, subcomplex 2 contains the OST-A-specific subunits STT3A, DC2/OSTC, and KCP2 as well as the core subunit OST4, and subcomplex 3 contains RPN2, DAD1, and OST48. The OST-A complex can form stable complexes with the Sec61 complex or with both the Sec61 and TRAP complexes. Mg(2+) serves as cofactor. It depends on Mn(2+) as a cofactor.

Its subcellular location is the endoplasmic reticulum. It is found in the endoplasmic reticulum membrane. The enzyme catalyses a di-trans,poly-cis-dolichyl diphosphooligosaccharide + L-asparaginyl-[protein] = N(4)-(oligosaccharide-(1-&gt;4)-N-acetyl-beta-D-glucosaminyl-(1-&gt;4)-N-acetyl-beta-D-glucosaminyl)-L-asparaginyl-[protein] + a di-trans,poly-cis-dolichyl diphosphate + H(+). Its pathway is protein modification; protein glycosylation. In terms of biological role, catalytic subunit of the oligosaccharyl transferase (OST) complex that catalyzes the initial transfer of a defined glycan (Glc(3)Man(9)GlcNAc(2) in eukaryotes) from the lipid carrier dolichol-pyrophosphate to an asparagine residue within an Asn-X-Ser/Thr consensus motif in nascent polypeptide chains, the first step in protein N-glycosylation. N-glycosylation occurs cotranslationally and the complex associates with the Sec61 complex at the channel-forming translocon complex that mediates protein translocation across the endoplasmic reticulum (ER). All subunits are required for a maximal enzyme activity. This subunit contains the active site and the acceptor peptide and donor lipid-linked oligosaccharide (LLO) binding pockets. STT3A is present in the majority of OST complexes and mediates cotranslational N-glycosylation of most sites on target proteins, while STT3B-containing complexes are required for efficient post-translational glycosylation and mediate glycosylation of sites that have been skipped by STT3A. STT3A-containing OST-A complex is also required to prevent hyperglycosylation of some target proteins by preventing glycosylation of facultative sites before folding of target proteins is completed. This is Dolichyl-diphosphooligosaccharide--protein glycosyltransferase subunit STT3A from Mus musculus (Mouse).